A 64-amino-acid polypeptide reads, in one-letter code: MKRIYQYFSLLSFTFSLYFGWLAYHHLAAEDMDQMYLNVSYCALFLSVMVFTFGMRDRKKTDKS.

2 helical membrane passes run 4-24 (IYQYFSLLSFTFSLYFGWLAY) and 35-55 (MYLNVSYCALFLSVMVFTFGM).

The protein localises to the cell membrane. This is an uncharacterized protein from Bacillus subtilis (strain 168).